Here is a 301-residue protein sequence, read N- to C-terminus: Mitochondrial carnitine/acylcarnitine carrier protein (301 aa).

N-acetylalanine is present on A2. The Cytoplasmic portion of the chain corresponds to 2-12 (ADQPKPISPLK). 3 Solcar repeats span residues 8–99 (ISPL…GKKL), 108–196 (LSYP…LKNI), and 207–293 (LSAP…AMKF). Residues 13–31 (NLLAGGFGGVCLVFVGHPL) traverse the membrane as a helical segment. The Mitochondrial matrix portion of the chain corresponds to 32–73 (DTVKVRLQTQPPSLPGQPPMYSGTFDCFRKTLFREGITGLYR). Residues 74-93 (GMAAPIIGVTPMFAVCFFGF) form a helical membrane-spanning segment. At 94–112 (GLGKKLQQKHPEDVLSYPQ) the chain is on the cytoplasmic side. Residues 113 to 131 (LFAAGMLSGVFTTGIMTPG) traverse the membrane as a helical segment. At 132-170 (ERIKCLLQIQASSGESKYTGTLDCAKKLYQEFGIRGIYK) the chain is on the mitochondrial matrix side. N6-acetyllysine is present on residues K148 and K157. K170 bears the N6-acetyllysine; alternate mark. At K170 the chain carries N6-succinyllysine; alternate. The helical transmembrane segment at 171–190 (GTVLTLMRDVPASGMYFMTY) threads the bilayer. Residues 191–211 (EWLKNIFTPEGKRVSELSAPR) lie on the Cytoplasmic side of the membrane. A helical transmembrane segment spans residues 212 to 230 (ILVAGGIAGIFNWAVAIPP). Residues 231 to 267 (DVLKSRFQTAPPGKYPNGFRDVLRELIRDEGVTSLYK) are Mitochondrial matrix-facing. A helical transmembrane segment spans residues 268–287 (GFNAVMIRAFPANAACFLGF). Residues 288–301 (EVAMKFLNWATPNL) lie on the Cytoplasmic side of the membrane.

It belongs to the mitochondrial carrier (TC 2.A.29) family.

The protein resides in the mitochondrion inner membrane. The enzyme catalyses O-acetyl-(R)-carnitine(in) + (R)-carnitine(out) = O-acetyl-(R)-carnitine(out) + (R)-carnitine(in). It carries out the reaction an O-acyl-(R)-carnitine(in) + (R)-carnitine(out) = an O-acyl-(R)-carnitine(out) + (R)-carnitine(in). It catalyses the reaction O-propanoyl-(R)-carnitine(in) + (R)-carnitine(out) = O-propanoyl-(R)-carnitine(out) + (R)-carnitine(in). The catalysed reaction is O-hexadecanoyl-(R)-carnitine(in) + (R)-carnitine(out) = O-hexadecanoyl-(R)-carnitine(out) + (R)-carnitine(in). The enzyme catalyses O-octanoyl-(R)-carnitine(in) + (R)-carnitine(out) = O-octanoyl-(R)-carnitine(out) + (R)-carnitine(in). It carries out the reaction (R)-carnitine(in) = (R)-carnitine(out). Functionally, mediates the electroneutral exchange of acylcarnitines (O-acyl-(R)-carnitine or L-acylcarnitine) of different acyl chain lengths (ranging from O-acetyl-(R)-carnitine to long-chain O-acyl-(R)-carnitines) with free carnitine ((R)-carnitine or L-carnitine) across the mitochondrial inner membrane, via a ping-pong mechanism. Key player in the mitochondrial oxidation pathway, it translocates the fatty acids in the form of acylcarnitines into the mitochondrial matrix, where the carnitine palmitoyltransferase 2 (CPT-2) activates them to undergo fatty acid beta-oxidation. Catalyzes the unidirectional transport (uniport) of carnitine at lower rates than the antiport (exchange). This is Mitochondrial carnitine/acylcarnitine carrier protein from Homo sapiens (Human).